Here is a 945-residue protein sequence, read N- to C-terminus: Xylosyltransferase 1 (945 aa).

Topologically, residues 1-17 are cytoplasmic; sequence MQAAPCARRLARRSHSA. A helical; Signal-anchor for type II membrane protein transmembrane segment spans residues 18 to 38; sequence LLAALTVLLLQTLVVWNFSSL. Over 39–945 the chain is Lumenal; that stretch reads DSGAGERRGG…GAVKPDGRLR (907 aa). A disordered region spans residues 42-245; the sequence is AGERRGGAAV…KYDQPPKCDI (204 aa). Gly residues predominate over residues 76–103; sequence RGGGGGGGGCGGGGRGPQARARGGGPGE. Over residues 131 to 147 the composition is skewed to basic and acidic residues; the sequence is KVRTDSNNENSVPKDFE. A compositionally biased stretch (polar residues) spans 149–158; it reads VDNSNFAPRT. A compositionally biased stretch (basic and acidic residues) spans 163–190; it reads HQPELAKKPPSRQKELLKRKLEQQEKGK. N-linked (GlcNAc...) asparagine glycosylation occurs at N212. The span at 235–245 shows a compositional bias: basic and acidic residues; it reads TKYDQPPKCDI. Intrachain disulfides connect C243/C271, C287/C528, C547/C560, and C549/C558. UDP-alpha-D-xylose-binding positions include V319, D347, and 376–378; that span reads TIW. N407 carries N-linked (GlcNAc...) asparagine glycosylation. 480-481 contacts UDP-alpha-D-xylose; the sequence is DW. Residues S561 and 584-585 contribute to the UDP-alpha-D-xylose site; that span reads RK. Intrachain disulfides connect C661–C913 and C906–C919. N763 carries N-linked (GlcNAc...) asparagine glycosylation. A disordered region spans residues 926 to 945; the sequence is SFSPDPKSELGAVKPDGRLR.

Belongs to the glycosyltransferase 14 family. XylT subfamily. In terms of assembly, monomer. Requires a divalent metal cation as cofactor. Post-translationally, contains 7 disulfide bonds. N-glycosylated.

Its subcellular location is the golgi apparatus membrane. The enzyme catalyses UDP-alpha-D-xylose + L-seryl-[protein] = 3-O-(beta-D-xylosyl)-L-seryl-[protein] + UDP + H(+). It functions in the pathway glycan metabolism; chondroitin sulfate biosynthesis. Its pathway is glycan metabolism; heparan sulfate biosynthesis. Catalyzes the first step in the biosynthesis of chondroitin sulfate and dermatan sulfate proteoglycans, such as DCN. Transfers D-xylose from UDP-D-xylose to specific serine residues of the core protein. Required for normal maturation of chondrocytes during bone development, normal onset of ossification and normal embryonic and postnatal skeleton development, especially of the long bones. The chain is Xylosyltransferase 1 (XYLT1) from Pan troglodytes (Chimpanzee).